We begin with the raw amino-acid sequence, 569 residues long: Proline--tRNA ligase (569 aa).

It belongs to the class-II aminoacyl-tRNA synthetase family. ProS type 1 subfamily. In terms of assembly, homodimer.

Its subcellular location is the cytoplasm. The enzyme catalyses tRNA(Pro) + L-proline + ATP = L-prolyl-tRNA(Pro) + AMP + diphosphate. Catalyzes the attachment of proline to tRNA(Pro) in a two-step reaction: proline is first activated by ATP to form Pro-AMP and then transferred to the acceptor end of tRNA(Pro). As ProRS can inadvertently accommodate and process non-cognate amino acids such as alanine and cysteine, to avoid such errors it has two additional distinct editing activities against alanine. One activity is designated as 'pretransfer' editing and involves the tRNA(Pro)-independent hydrolysis of activated Ala-AMP. The other activity is designated 'posttransfer' editing and involves deacylation of mischarged Ala-tRNA(Pro). The misacylated Cys-tRNA(Pro) is not edited by ProRS. The protein is Proline--tRNA ligase of Latilactobacillus sakei subsp. sakei (strain 23K) (Lactobacillus sakei subsp. sakei).